Reading from the N-terminus, the 416-residue chain is CapZ-interacting protein (416 aa).

Disordered stretches follow at residues 1–84 (MEER…KSSP) and 98–416 (AALL…DTKM). Positions 8 to 20 (TNANVDNSASPSV) are enriched in polar residues. Ser17 bears the Phosphoserine mark. Phosphoserine; by MAPK8; in vitro is present on Ser68. Ser82 carries the phosphoserine modification. Ser83 bears the Phosphoserine; by MAPK8; in vitro mark. At Ser105 the chain carries Phosphoserine. Ser108 bears the Phosphoserine; by MAPK12 and MAPK13 mark. Residues Ser116, Ser120, and Ser123 each carry the phosphoserine modification. A Phosphothreonine modification is found at Thr124. Ser126, Ser127, Ser135, and Ser143 each carry phosphoserine. Residues 159–176 (VRTRGSIKRRPPSRRFRR) are compositionally biased toward basic residues. A Phosphoserine modification is found at Ser177. A Phosphoserine; by MAPKAPK2 and MAPKAPK3 modification is found at Ser179. A Phosphoserine; by MAPK8; in vitro modification is found at Ser216. Positions 227-330 (GVRTLGPAEK…RVQNEEVGPE (104 aa)) constitute an RCSD domain. At Ser244 the chain carries Phosphoserine; by MAPKAPK2 or MAPKAPK3; in vitro. Residues 244–273 (SRTEKQEEDRATEEAKNGEKARRSSEEVDG) are compositionally biased toward basic and acidic residues. Phosphoserine is present on residues Ser267, Ser268, Ser284, Ser298, and Ser333. Positions 292–349 (AENRCGSPREEKPAGEEAEMEKATEVKGERVQNEEVGPEHDSQETKKLEEGAAVKETP) are enriched in basic and acidic residues. Phosphothreonine is present on Thr336. At Ser351 the chain carries Phosphoserine. Residues 360–372 (DVPKQEKGKEKQQ) show a composition bias toward basic and acidic residues. The segment covering 382 to 397 (SPQTGPAQLETSSEVQ) has biased composition (polar residues).

In terms of assembly, interacts with CAPZA2 and CAPZB. In terms of processing, dephosphorylation results in its dissociation from CAPZA2. In terms of tissue distribution, highly expressed in skeletal muscle and more weakly in cardiac muscle. Also expressed in several lymphoid organs, including spleen, thymus, peripheral blood leukocytes, lymph node and bone marrow.

Functionally, stress-induced phosphorylation of CAPZIP may regulate the ability of F-actin-capping protein to remodel actin filament assembly. This Homo sapiens (Human) protein is CapZ-interacting protein (RCSD1).